The primary structure comprises 533 residues: Adenylate kinase 7 (533 aa).

The segment at 177 to 426 (PVKICILGPP…EPRNYGLTDE (250 aa)) is adenylate kinase. Residue 187-192 (AVGKSS) participates in ATP binding. The segment at 207–265 (QLKDVISEAIAKLETIVAPKDIGEGKEEVEEEEEEENVEDAQELLDGIKESMEQNAGQL) is NMP. AMP is bound by residues 242 to 265 (ENVE…AGQL), 292 to 295 (GFPK), and glutamine 299. Residues 347–357 (NLPERIVAGTH) are LID. Arginine 365 is a binding site for AMP. Residue glycine 397 participates in ATP binding. A coiled-coil region spans residues 419-487 (RNYGLTDEEK…EERELLEAQS (69 aa)). Positions 489 to 533 (PLRNYLMTYVMPTLIQGLNECCNVRPEDPVDFLAEYLFKNNPEAQ) are DPY-30.

The protein in the central section; belongs to the adenylate kinase family. It in the C-terminal section; belongs to the dpy-30 family.

It localises to the cytoplasm. The protein resides in the cytosol. It is found in the cell projection. The protein localises to the cilium. Its subcellular location is the flagellum. It catalyses the reaction AMP + ATP = 2 ADP. The catalysed reaction is a 2'-deoxyribonucleoside 5'-diphosphate + ATP = a 2'-deoxyribonucleoside 5'-triphosphate + ADP. The enzyme catalyses a ribonucleoside 5'-diphosphate + ATP = a ribonucleoside 5'-triphosphate + ADP. Nucleoside monophosphate (NMP) kinase that catalyzes the reversible transfer of the terminal phosphate group between nucleoside triphosphates and monophosphates. Has highest activity toward AMP, and weaker activity toward dAMP, CMP and dCMP. Also displays broad nucleoside diphosphate kinase activity. Involved in maintaining ciliary structure and function. The chain is Adenylate kinase 7 (AK7) from Macaca fascicularis (Crab-eating macaque).